The following is a 337-amino-acid chain: CMP-N-acetylneuraminate-beta-galactosamide-alpha-2,3-sialyltransferase 1 (337 aa).

Over 1 to 4 the chain is Cytoplasmic; the sequence is MRRK. A helical; Signal-anchor for type II membrane protein transmembrane segment spans residues 5 to 25; it reads TLKYLTFFLLFIFLTSFVLNY. Residues 26-337 lie on the Lumenal side of the membrane; it reads SNTGVPSAWF…INKIRIFKGR (312 aa). 3 disulfide bridges follow: Cys-56/Cys-61, Cys-58/Cys-136, and Cys-139/Cys-278. N-linked (GlcNAc...) asparagine glycosylation occurs at Asn-76. Substrate is bound at residue Gln-102. Asn-109 is a glycosylation site (N-linked (GlcNAc...) asparagine). The substrate site is built by Asn-144, Asn-167, Tyr-227, Tyr-263, Gly-267, Gly-287, His-296, and His-313. The N-linked (GlcNAc...) asparagine glycan is linked to Asn-320.

It belongs to the glycosyltransferase 29 family. Post-translationally, the soluble form derives from the membrane form by proteolytic processing. Highly expressed in submaxillary gland and to a much lesser extent in liver, lung, kidney, heart and brain.

The protein localises to the golgi apparatus. It is found in the golgi stack membrane. Its subcellular location is the trans-Golgi network membrane. It localises to the secreted. It carries out the reaction a beta-D-galactosyl-(1-&gt;3)-N-acetyl-alpha-D-galactosaminyl derivative + CMP-N-acetyl-beta-neuraminate = an N-acetyl-alpha-neuraminyl-(2-&gt;3)-beta-D-galactosyl-(1-&gt;3)-N-acetyl-alpha-D-galactosaminyl derivative + CMP + H(+). The enzyme catalyses a ganglioside GM1 (d18:1(4E)) + CMP-N-acetyl-beta-neuraminate = a ganglioside GD1a (d18:1(4E)) + CMP + H(+). The catalysed reaction is ganglioside GM1 (d18:1(4E)/18:0) + CMP-N-acetyl-beta-neuraminate = ganglioside GD1a (18:1(4E)/18:0) + CMP + H(+). It catalyses the reaction a ganglioside GA1 + CMP-N-acetyl-beta-neuraminate = a ganglioside GM1b + CMP + H(+). It carries out the reaction a ganglioside GA1 (d18:1(4E)) + CMP-N-acetyl-beta-neuraminate = a ganglioside GM1b (d18:1(4E)) + CMP + H(+). The enzyme catalyses a ganglioside GD1b + CMP-N-acetyl-beta-neuraminate = a ganglioside GT1b + CMP + H(+). The catalysed reaction is a 3-O-[beta-D-galactosyl-(1-&gt;3)-N-acetyl-alpha-D-galactosaminyl]-L-threonyl-[protein] + CMP-N-acetyl-beta-neuraminate = a 3-O-[N-acetyl-alpha-neuraminyl-(2-&gt;3)-beta-D-galactosyl-(1-&gt;3)-N-acetyl-alpha-D-galactosaminyl]-L-threonyl-[protein] + CMP + H(+). It catalyses the reaction a 3-O-[beta-D-galactosyl-(1-&gt;3)-N-acetyl-alpha-D-galactosaminyl]-L-seryl-[protein] + CMP-N-acetyl-beta-neuraminate = 3-O-[N-acetyl-alpha-neuraminyl-(2-&gt;3)-beta-D-galactosyl-(1-&gt;3)-N-acetyl-alpha-D-galactosaminyl]-L-seryl-[protein] + CMP + H(+). It participates in protein modification; protein glycosylation. It functions in the pathway glycolipid biosynthesis. In terms of biological role, a beta-galactoside alpha2-&gt;3 sialyltransferase involved in terminal sialylation of glycoproteins and glycolipids. Catalyzes the transfer of sialic acid (N-acetyl-neuraminic acid; Neu5Ac) from the nucleotide sugar donor CMP-Neu5Ac onto acceptor Galbeta-(1-&gt;3)-GalNAc-terminated glycoconjugates through an alpha2-3 linkage. Adds sialic acid to the core 1 O-glycan, Galbeta-(1-&gt;3)-GalNAc-O-Ser/Thr, which is a major structure of mucin-type O-glycans. As part of a homeostatic mechanism that regulates CD8-positive T cell numbers, sialylates core 1 O-glycans of T cell glycoproteins, SPN/CD43 and PTPRC/CD45. Prevents premature apoptosis of thymic CD8-positive T cells prior to peripheral emigration, whereas in the secondary lymphoid organs controls the survival of CD8-positive memory T cells generated following a successful immune response. Transfers sialic acid to asialofetuin, presumably onto Galbeta-(1-&gt;3)-GalNAc-O-Ser. Sialylates GM1a, GA1 and GD1b gangliosides to form GD1a, GM1b and GT1b, respectively. The protein is CMP-N-acetylneuraminate-beta-galactosamide-alpha-2,3-sialyltransferase 1 (St3gal1) of Mus musculus (Mouse).